A 435-amino-acid polypeptide reads, in one-letter code: YRLTYYTPDYQVSDTDILAAFRMTPQPGVPAEECGAAVAAESSTGTWTTVWTDGLTQLDRYKGRCYDLEPVPGESNQYIAYVAYPIDLFEEGSVTNLLTSIVGNVFGFKALRALRLEDLRIPPAYIKTFWGPPHGIQVERDRLNKYGRPLLGCTIKPKLGLSAKNYGRAVYECLRGGLDFTKDDENVNSQSFMRWRDRFXXXSEAIYKAQSETGEVKGHYLNATAGNVEEMYKRAAFAAQLGVPIVMHDYLTGGFTANTSLSMYCRDNGLLLHIHRAMHAVIDRQRNHGIHFRVLAKTLRMSGGDHLHSGTVVGKLEGEREVTLGFVDLMRDPYVEKDRSRGIYFTQDWCGMGGTMPVASGGIHVWHMPALTEIFGDDACLQFGGGTLGHPWGNAPGAAANRVASEACVQARNEGRDLSREGGDVIREACKWSPE.

2 residues coordinate substrate: N104 and T154. K156 (proton acceptor) is an active-site residue. K158 serves as a coordination point for substrate. Positions 182, 184, and 185 each coordinate Mg(2+). K182 bears the N6-carboxylysine mark. H275 serves as the catalytic Proton acceptor. Residues R276, H308, and S360 each contribute to the substrate site.

Belongs to the RuBisCO large chain family. Type I subfamily. Heterohexadecamer of 8 large chains and 8 small chains. Requires Mg(2+) as cofactor.

The protein localises to the plastid. It localises to the chloroplast. The enzyme catalyses 2 (2R)-3-phosphoglycerate + 2 H(+) = D-ribulose 1,5-bisphosphate + CO2 + H2O. The catalysed reaction is D-ribulose 1,5-bisphosphate + O2 = 2-phosphoglycolate + (2R)-3-phosphoglycerate + 2 H(+). RuBisCO catalyzes two reactions: the carboxylation of D-ribulose 1,5-bisphosphate, the primary event in carbon dioxide fixation, as well as the oxidative fragmentation of the pentose substrate in the photorespiration process. Both reactions occur simultaneously and in competition at the same active site. The sequence is that of Ribulose bisphosphate carboxylase large chain from Euglena pisciformis.